The following is a 374-amino-acid chain: DNA replication and repair protein RecF (374 aa).

34 to 41 (GNNGAGKT) provides a ligand contact to ATP.

This sequence belongs to the RecF family.

It localises to the cytoplasm. The RecF protein is involved in DNA metabolism; it is required for DNA replication and normal SOS inducibility. RecF binds preferentially to single-stranded, linear DNA. It also seems to bind ATP. This is DNA replication and repair protein RecF from Rhizobium etli (strain CIAT 652).